We begin with the raw amino-acid sequence, 62 residues long: UPF0434 protein Rleg2_3773 (62 aa).

This sequence belongs to the UPF0434 family.

The chain is UPF0434 protein Rleg2_3773 from Rhizobium leguminosarum bv. trifolii (strain WSM2304).